We begin with the raw amino-acid sequence, 495 residues long: UDP-glycosyltransferase 73C25 (495 aa).

23–26 (GHMI) is a binding site for UDP-alpha-D-glucose. His-24 acts as the Proton acceptor in catalysis. The active-site Charge relay is Asp-129. UDP-alpha-D-glucose contacts are provided by residues 355-358 (WSPQ), 373-381 (HCGWNSTLE), and 397-398 (DQ).

It belongs to the UDP-glycosyltransferase family.

In terms of biological role, catalyzes the transfer of a glucose (Glc) moiety from UDP-Glc to the C-28 carboxylic group of oleanolate 3-O-beta-D-glucoside to form oleanolate 3,28-O-beta-D-diglucoside. This chain is UDP-glycosyltransferase 73C25, found in Barbarea vulgaris (Yellow rocket).